A 500-amino-acid polypeptide reads, in one-letter code: Pyridine nucleotide-disulfide oxidoreductase domain-containing protein 1 (500 aa).

M1 bears the N-acetylmethionine mark.

This sequence belongs to the class-I pyridine nucleotide-disulfide oxidoreductase family. PYROXD1 subfamily. FAD is required as a cofactor.

The protein resides in the nucleus. Its subcellular location is the cytoplasm. The protein localises to the myofibril. It localises to the sarcomere. Probable FAD-dependent oxidoreductase; involved in the cellular oxidative stress response. Required for normal sarcomere structure and muscle fiber integrity. The chain is Pyridine nucleotide-disulfide oxidoreductase domain-containing protein 1 (PYROXD1) from Pongo abelii (Sumatran orangutan).